A 328-amino-acid chain; its full sequence is DNA-directed RNA polymerase subunit alpha (328 aa).

The tract at residues M1 to E234 is alpha N-terminal domain (alpha-NTD). The interval I248 to D328 is alpha C-terminal domain (alpha-CTD).

This sequence belongs to the RNA polymerase alpha chain family. Homodimer. The RNAP catalytic core consists of 2 alpha, 1 beta, 1 beta' and 1 omega subunit. When a sigma factor is associated with the core the holoenzyme is formed, which can initiate transcription.

It carries out the reaction RNA(n) + a ribonucleoside 5'-triphosphate = RNA(n+1) + diphosphate. DNA-dependent RNA polymerase catalyzes the transcription of DNA into RNA using the four ribonucleoside triphosphates as substrates. This Cellvibrio japonicus (strain Ueda107) (Pseudomonas fluorescens subsp. cellulosa) protein is DNA-directed RNA polymerase subunit alpha.